A 205-amino-acid polypeptide reads, in one-letter code: Holliday junction branch migration complex subunit RuvA (205 aa).

Residues 1 to 64 (MIGKLKGVID…EDQIKLFGFR (64 aa)) are domain I. The segment at 65 to 143 (SDIEREWFRL…AFANVDPAVV (79 aa)) is domain II. Positions 144–154 (HLAGAVDDDRA) are flexible linker. The interval 154 to 205 (APRPVKDAISALVNLGYGQPQAAAAIASVARDAGEGAETAQLIRLGLKELAK) is domain III.

Belongs to the RuvA family. As to quaternary structure, homotetramer. Forms an RuvA(8)-RuvB(12)-Holliday junction (HJ) complex. HJ DNA is sandwiched between 2 RuvA tetramers; dsDNA enters through RuvA and exits via RuvB. An RuvB hexamer assembles on each DNA strand where it exits the tetramer. Each RuvB hexamer is contacted by two RuvA subunits (via domain III) on 2 adjacent RuvB subunits; this complex drives branch migration. In the full resolvosome a probable DNA-RuvA(4)-RuvB(12)-RuvC(2) complex forms which resolves the HJ.

The protein resides in the cytoplasm. Functionally, the RuvA-RuvB-RuvC complex processes Holliday junction (HJ) DNA during genetic recombination and DNA repair, while the RuvA-RuvB complex plays an important role in the rescue of blocked DNA replication forks via replication fork reversal (RFR). RuvA specifically binds to HJ cruciform DNA, conferring on it an open structure. The RuvB hexamer acts as an ATP-dependent pump, pulling dsDNA into and through the RuvAB complex. HJ branch migration allows RuvC to scan DNA until it finds its consensus sequence, where it cleaves and resolves the cruciform DNA. In Afipia carboxidovorans (strain ATCC 49405 / DSM 1227 / KCTC 32145 / OM5) (Oligotropha carboxidovorans), this protein is Holliday junction branch migration complex subunit RuvA.